A 551-amino-acid chain; its full sequence is Putative hydroxymethylpyrimidine/phosphomethylpyrimidine kinase 2 (551 aa).

Glu-76 serves as a coordination point for 4-amino-5-hydroxymethyl-2-methylpyrimidine.

The protein in the N-terminal section; belongs to the ThiD family. This sequence in the C-terminal section; belongs to the thiaminase-2 family.

The protein resides in the cytoplasm. It catalyses the reaction 4-amino-5-hydroxymethyl-2-methylpyrimidine + ATP = 4-amino-2-methyl-5-(phosphooxymethyl)pyrimidine + ADP + H(+). The enzyme catalyses 4-amino-2-methyl-5-(phosphooxymethyl)pyrimidine + ATP = 4-amino-2-methyl-5-(diphosphooxymethyl)pyrimidine + ADP. It participates in cofactor biosynthesis; thiamine diphosphate biosynthesis; 4-amino-2-methyl-5-diphosphomethylpyrimidine from 5-amino-1-(5-phospho-D-ribosyl)imidazole: step 2/3. The protein operates within cofactor biosynthesis; thiamine diphosphate biosynthesis; 4-amino-2-methyl-5-diphosphomethylpyrimidine from 5-amino-1-(5-phospho-D-ribosyl)imidazole: step 3/3. Its function is as follows. Catalyzes the phosphorylation of hydroxymethylpyrimidine phosphate (HMP-P) to HMP-PP, and of HMP to HMP-P. This chain is Putative hydroxymethylpyrimidine/phosphomethylpyrimidine kinase 2, found in Schizosaccharomyces pombe (strain 972 / ATCC 24843) (Fission yeast).